Here is a 349-residue protein sequence, read N- to C-terminus: Alcohol dehydrogenase 1 (349 aa).

C46, H69, C100, C103, C106, C114, and C156 together coordinate Zn(2+). NAD(+) is bound by residues 180-186 (GAGGGLG), D204, K208, 270-272 (VGL), and R342.

This sequence belongs to the zinc-containing alcohol dehydrogenase family. In terms of assembly, homotetramer. The cofactor is Zn(2+).

It catalyses the reaction a primary alcohol + NAD(+) = an aldehyde + NADH + H(+). It carries out the reaction a secondary alcohol + NAD(+) = a ketone + NADH + H(+). The chain is Alcohol dehydrogenase 1 from Caenorhabditis elegans.